A 776-amino-acid polypeptide reads, in one-letter code: DNA ligase (776 aa).

NAD(+) is bound by residues 31-35 (DAEYD), 80-81 (SL), and E112. The N6-AMP-lysine intermediate role is filled by K114. Positions 135, 172, 288, and 312 each coordinate NAD(+). Zn(2+) is bound by residues C406, C409, C436, and C442. Positions 693–776 (AEGLPLAGQT…TFLAEQGIAV (84 aa)) constitute a BRCT domain.

Belongs to the NAD-dependent DNA ligase family. LigA subfamily. The cofactor is Mg(2+). Mn(2+) serves as cofactor.

It catalyses the reaction NAD(+) + (deoxyribonucleotide)n-3'-hydroxyl + 5'-phospho-(deoxyribonucleotide)m = (deoxyribonucleotide)n+m + AMP + beta-nicotinamide D-nucleotide.. In terms of biological role, DNA ligase that catalyzes the formation of phosphodiester linkages between 5'-phosphoryl and 3'-hydroxyl groups in double-stranded DNA using NAD as a coenzyme and as the energy source for the reaction. It is essential for DNA replication and repair of damaged DNA. The polypeptide is DNA ligase (Pseudomonas putida (strain ATCC 700007 / DSM 6899 / JCM 31910 / BCRC 17059 / LMG 24140 / F1)).